Here is a 278-residue protein sequence, read N- to C-terminus: 3-oxoacyl-[acyl-carrier-protein] reductase (278 aa).

12 residues coordinate NADP(+): Thr-13, Arg-14, Ile-16, Ser-36, Ser-40, Thr-44, Asp-66, Phe-67, Glu-77, Gly-122, Gln-125, and Glu-126. The active-site Proton donor is the Ser-182. NADP(+)-binding residues include Tyr-198, Lys-202, Leu-230, and Val-231. Tyr-198 (proton acceptor) is an active-site residue. The active-site Lowers pKa of active site Tyr is Lys-202.

The protein belongs to the short-chain dehydrogenases/reductases (SDR) family.

The protein localises to the mitochondrion. It carries out the reaction a (3R)-hydroxyacyl-[ACP] + NADP(+) = a 3-oxoacyl-[ACP] + NADPH + H(+). Its pathway is lipid metabolism; fatty acid biosynthesis. Functionally, involved in biosynthesis of fatty acids in mitochondria. The chain is 3-oxoacyl-[acyl-carrier-protein] reductase (OAR1) from Saccharomyces cerevisiae (strain ATCC 204508 / S288c) (Baker's yeast).